The sequence spans 532 residues: E3 ubiquitin-protein ligase rnf8-B (532 aa).

Residues 30 to 84 form the FHA domain; sequence VTMGRGLGVTYQLKPTLCPLMISRTHCLFKQNARDEWTVTDNKSLNGVWRNKERL. Positions 127–209 are disordered; that stretch reads SLIRPLPGKT…VETDTVSPTQ (83 aa). Residues 169-178 are compositionally biased toward basic and acidic residues; that stretch reads VSRDGEDSAK. The RING-type zinc-finger motif lies at 377-415; the sequence is CIICSEHFIEAVTLNCAHSFCSYCIKSWRKRKEECPICR.

This sequence belongs to the RNF8 family. As to quaternary structure, homodimer. Forms a E2-E3 ubiquitin ligase complex composed of the rnf8 homodimer and a E2 heterodimer of ube2n and ube2v2.

The protein localises to the nucleus. The catalysed reaction is S-ubiquitinyl-[E2 ubiquitin-conjugating enzyme]-L-cysteine + [acceptor protein]-L-lysine = [E2 ubiquitin-conjugating enzyme]-L-cysteine + N(6)-ubiquitinyl-[acceptor protein]-L-lysine.. Its pathway is protein modification; protein ubiquitination. Functionally, E3 ubiquitin-protein ligase that plays a key role in DNA damage signaling via 2 distinct roles: by mediating the 'Lys-63'-linked ubiquitination of histones H2A and H2AX and promoting the recruitment of DNA repair proteins at double-strand breaks (DSBs) sites, and by catalyzing 'Lys-48'-linked ubiquitination to remove target proteins from DNA damage sites. Following DNA DSBs, it is recruited to the sites of damage by ATM-phosphorylated mdc1 and catalyzes the 'Lys-63'-linked ubiquitination of histones H2A and H2AX, thereby promoting the formation of tp53bp1 and brca1 ionizing radiation-induced foci (IRIF). H2A ubiquitination also mediates the ATM-dependent transcriptional silencing at regions flanking DSBs in cis, a mechanism to avoid collision between transcription and repair intermediates. Also catalyzes the formation of 'Lys-48'-linked polyubiquitin chains, leading to degradation of substrate proteins. In addition to its function in damage signaling, also plays a role in higher-order chromatin structure by mediating extensive chromatin decondensation. The sequence is that of E3 ubiquitin-protein ligase rnf8-B from Xenopus laevis (African clawed frog).